The following is an 87-amino-acid chain: Lantipeptide prochlorosin 3.3 (87 aa).

A propeptide spanning residues 1-64 (MSEEQLKAFI…DEELEAASGG (64 aa)) is cleaved from the precursor. At Thr-67 the chain carries 2,3-didehydrobutyrine. Residues 75–85 (TAGCYGGTKMC) constitute a cross-link (beta-methyllanthionine (Thr-Cys)). The beta-methyllanthionine (Cys-Thr) cross-link spans 78–82 (CYGGT).

Cross-links are proved in vitro, when coepressed in E.coli with the ProcM lanthionine synthetase. Post-translationally, the beta-methyllanthionine residues have a DL configuration (with 2S,3S,6R stereochemistry). In terms of processing, maturation of prochlorosin involves the enzymatic conversion of Thr, and Ser into dehydrated AA and the formation of thioether bonds with cysteines. This is followed by membrane translocation and cleavage of the modified precursor.

Its subcellular location is the secreted. In terms of biological role, lanthionine-containing peptide (lantipeptide) with unknown function. Does not show antibiotic activity against Lactococcus lactis 117 and Bacillus subtilis 6633 bacteria. Organisms that produce this peptide live in oligotrophic environments at very dilute concentrations, suggesting this peptide is not secreted to influence other bacteria. The sequence is that of Lantipeptide prochlorosin 3.3 from Prochlorococcus marinus (strain MIT 9313).